The chain runs to 100 residues: Osteocalcin (100 aa).

Residues 1–23 (MRTPMLLALLALATLCLAGRADA) form the signal peptide. A propeptide spanning residues 24–51 (KPGDAESGKGAAFVSKQEGSEVVKRLRR) is cleaved from the precursor. The region spanning 52 to 98 (YLDHWLGAPAPYPDPLEPKREVCELNPDCDELADHIGFQEAYRRFYG) is the Gla domain. P60 is modified (4-hydroxyproline). Residues E68, E72, E75, and D81 each coordinate Ca(2+). A 4-carboxyglutamate mark is found at E68, E72, and E75. Cysteines 74 and 80 form a disulfide.

This sequence belongs to the osteocalcin/matrix Gla protein family. Post-translationally, gamma-carboxyglutamate residues are formed by vitamin K dependent carboxylation by GGCX. These residues are essential for the binding of calcium. Decarboxylation promotes the hormone activity.

It localises to the secreted. The carboxylated form is one of the main organic components of the bone matrix, which constitutes 1-2% of the total bone protein. It acts as a negative regulator of bone formation and is required to limit bone formation without impairing bone resorption or mineralization. The carboxylated form binds strongly to apatite and calcium. In terms of biological role, the uncarboxylated form acts as a hormone secreted by osteoblasts, which regulates different cellular processes, such as energy metabolism, male fertility and brain development. Regulates of energy metabolism by acting as a hormone favoring pancreatic beta-cell proliferation, insulin secretion and sensitivity and energy expenditure. Uncarboxylated osteocalcin hormone also promotes testosterone production in the testes: acts as a ligand for G protein-coupled receptor GPRC6A at the surface of Leydig cells, initiating a signaling response that promotes the expression of enzymes required for testosterone synthesis in a CREB-dependent manner. Also acts as a regulator of brain development: osteocalcin hormone crosses the blood-brain barrier and acts as a ligand for GPR158 on neurons, initiating a signaling response that prevents neuronal apoptosis in the hippocampus, favors the synthesis of all monoamine neurotransmitters and inhibits that of gamma-aminobutyric acid (GABA). Osteocalcin also crosses the placenta during pregnancy and maternal osteocalcin is required for fetal brain development. In Bos taurus (Bovine), this protein is Osteocalcin (BGLAP).